A 292-amino-acid chain; its full sequence is MPQHDQLHRYLFENFAVRGELVTVSETLQQILENHDYPQPVKNVLAELLVATSLLTATLKFDGDITVQLQGDGPMNLAVINGNNNQQMRGVARVQGEIPENADLKTLVGNGYVVITITPSEGERYQGVVGLEGDTLAACLEDYFMRSEQLPTRLFIRTGDVDGKPAAGGMLLQVMPAQNAQQDDFDHLATLTETIKTEELLTLPANEVLWRLYHEEEVTVYDPQDVEFKCTCSRERCADALKTLPDEEVDSILAEDGEIDMHCDYCGNHYLFNAMDIAEIRNNASPADPQVH.

2 disulfide bridges follow: C230–C232 and C263–C266.

This sequence belongs to the HSP33 family. Post-translationally, under oxidizing conditions two disulfide bonds are formed involving the reactive cysteines. Under reducing conditions zinc is bound to the reactive cysteines and the protein is inactive.

Its subcellular location is the cytoplasm. In terms of biological role, redox regulated molecular chaperone. Protects both thermally unfolding and oxidatively damaged proteins from irreversible aggregation. Plays an important role in the bacterial defense system toward oxidative stress. The chain is 33 kDa chaperonin from Shigella dysenteriae serotype 1 (strain Sd197).